The following is an 848-amino-acid chain: Adenylate cyclase (848 aa).

The tract at residues 1–535 (MYLYIETLKQ…DVSHHFPLRL (535 aa)) is catalytic. The regulatory stretch occupies residues 541-848 (KALYSPCEIR…DTPLLQQYFS (308 aa)). H609 bears the Phosphohistidine; by CRR mark.

Belongs to the adenylyl cyclase class-1 family.

Its subcellular location is the cytoplasm. The enzyme catalyses ATP = 3',5'-cyclic AMP + diphosphate. The protein is Adenylate cyclase (cyaA) of Escherichia coli O157:H7.